A 343-amino-acid chain; its full sequence is Probable dual-specificity RNA methyltransferase RlmN (343 aa).

Glutamate 93 acts as the Proton acceptor in catalysis. The Radical SAM core domain maps to 99-320 (TDDRATLCVS…NAKGVVCTIR (222 aa)). A disulfide bond links cysteine 106 and cysteine 331. Cysteine 113, cysteine 117, and cysteine 120 together coordinate [4Fe-4S] cluster. S-adenosyl-L-methionine contacts are provided by residues 158-159 (GE), serine 190, 212-214 (SLH), and histidine 288. Cysteine 331 acts as the S-methylcysteine intermediate in catalysis.

Belongs to the radical SAM superfamily. RlmN family. Requires [4Fe-4S] cluster as cofactor.

Its subcellular location is the cytoplasm. The enzyme catalyses adenosine(2503) in 23S rRNA + 2 reduced [2Fe-2S]-[ferredoxin] + 2 S-adenosyl-L-methionine = 2-methyladenosine(2503) in 23S rRNA + 5'-deoxyadenosine + L-methionine + 2 oxidized [2Fe-2S]-[ferredoxin] + S-adenosyl-L-homocysteine. It carries out the reaction adenosine(37) in tRNA + 2 reduced [2Fe-2S]-[ferredoxin] + 2 S-adenosyl-L-methionine = 2-methyladenosine(37) in tRNA + 5'-deoxyadenosine + L-methionine + 2 oxidized [2Fe-2S]-[ferredoxin] + S-adenosyl-L-homocysteine. Functionally, specifically methylates position 2 of adenine 2503 in 23S rRNA and position 2 of adenine 37 in tRNAs. This Parabacteroides distasonis (strain ATCC 8503 / DSM 20701 / CIP 104284 / JCM 5825 / NCTC 11152) protein is Probable dual-specificity RNA methyltransferase RlmN.